Here is a 419-residue protein sequence, read N- to C-terminus: Keratin, type II cytoskeletal I (419 aa).

Positions 1 to 16 (KGSTKRANLDPLFEKY) are linker 1. In terms of domain architecture, IF rod spans 1 to 275 (KGSTKRANLD…YMLEGEEGRM (275 aa)). Residues 17–108 (ISDLKRYLDN…TLFAAELSQV (92 aa)) form a coil 1B region. A linker 12 region spans residues 109–132 (HDQVTDTSVVLTMDNNRDLNLDSI). Residues 133–271 (IKEVKCQYEQ…STYRYMLEGE (139 aa)) are coil 2. The tail stretch occupies residues 272–419 (EGRMSGQISN…STTSTTKRSY (148 aa)).

It belongs to the intermediate filament family. As to quaternary structure, heterotetramer of two type I and two type II keratins.

This is Keratin, type II cytoskeletal I from Xenopus laevis (African clawed frog).